Reading from the N-terminus, the 66-residue chain is Large ribosomal subunit protein bL35c (66 aa).

This sequence belongs to the bacterial ribosomal protein bL35 family.

It is found in the plastid. It localises to the chloroplast. This Gracilaria tenuistipitata var. liui (Red alga) protein is Large ribosomal subunit protein bL35c.